The following is a 306-amino-acid chain: Heme A synthase (306 aa).

Residues 1–5 (MKALR) are Cytoplasmic-facing. The chain crosses the membrane as a helical span at residues 6-26 (AVSLANTAVMLLAVLWGAWVT). At 27 to 56 (SSDSGDGCGASWPLCKGTFMPDWDYAAIVE) the chain is on the extracellular side. Cysteines 34 and 41 form a disulfide. Residue E56 is part of the active site. The chain crosses the membrane as a helical span at residues 57-77 (FGHRVVSALAGLLSVAVLVWV). H59 provides a ligand contact to heme o. The Cytoplasmic segment spans residues 78–89 (ARVRPSETRLKR). The helical transmembrane segment at 90 to 110 (LAFGTFFFVVLQGGLGAAAVL) threads the bilayer. The Extracellular segment spans residues 111 to 116 (RPQPDL). A helical membrane pass occupies residues 117 to 137 (VMALHFGFSLLCFTFALLVTV). Position 121 (H121) interacts with heme o. Residues 138–164 (ALGQGERAAFQRPDVSAQPVAPGLRTQ) are Cytoplasmic-facing. Residues 165–185 (IWGLAVYTYLVVYLGAYVRHL) form a helical membrane-spanning segment. Topologically, residues 186–206 (GASMACTGWPLCNGELIPPLY) are extracellular. A disulfide bridge links C191 with C197. A helical transmembrane segment spans residues 207 to 227 (GPVGANFAHRLGAALAVVLVL). H215 serves as a coordination point for heme b. At 228–247 (RLWWTARRLTERDDLRRGAA) the chain is on the cytoplasmic side. The helical transmembrane segment at 248-268 (WALALMAAQVASGALFPLGYL) threads the bilayer. The Extracellular portion of the chain corresponds to 269-277 (NLLTQLLHT). H276 is a heme b binding site. Residues 278–298 (GLITGFWGVLSYLCYLTLPVG) traverse the membrane as a helical segment. At 299-306 (RETVAVSA) the chain is on the cytoplasmic side.

It belongs to the COX15/CtaA family. Type 1 subfamily. As to quaternary structure, interacts with CtaB. The cofactor is heme b.

It localises to the cell membrane. It catalyses the reaction Fe(II)-heme o + 2 A + H2O = Fe(II)-heme a + 2 AH2. It participates in porphyrin-containing compound metabolism; heme A biosynthesis; heme A from heme O: step 1/1. Functionally, catalyzes the conversion of heme O to heme A by two successive hydroxylations of the methyl group at C8. The first hydroxylation forms heme I, the second hydroxylation results in an unstable dihydroxymethyl group, which spontaneously dehydrates, resulting in the formyl group of heme A. The sequence is that of Heme A synthase from Symbiobacterium thermophilum (strain DSM 24528 / JCM 14929 / IAM 14863 / T).